The chain runs to 217 residues: Dense granule protein 1 (217 aa).

A signal peptide spans 1–19 (MARQATFIVALCVCGLAIA). Over residues 171-183 (VASEDSALGNSEE) the composition is skewed to polar residues. The interval 171–217 (VASEDSALGNSEEQYVEGTVNGSSDPEQERAGGPLIPEGDEQEVDTE) is disordered. Asparagine 191 carries N-linked (GlcNAc...) asparagine glycosylation. The span at 208-217 (EGDEQEVDTE) shows a compositional bias: acidic residues.

This sequence belongs to the Gra7 family.

It is found in the secreted. This chain is Dense granule protein 1 (DG1), found in Neospora caninum (Coccidian parasite).